We begin with the raw amino-acid sequence, 209 residues long: 8-oxoguanine DNA glycosylase/AP lyase (209 aa).

Catalysis depends on residues K131 and D149.

It belongs to the type-2 OGG1 family.

The enzyme catalyses 2'-deoxyribonucleotide-(2'-deoxyribose 5'-phosphate)-2'-deoxyribonucleotide-DNA = a 3'-end 2'-deoxyribonucleotide-(2,3-dehydro-2,3-deoxyribose 5'-phosphate)-DNA + a 5'-end 5'-phospho-2'-deoxyribonucleoside-DNA + H(+). Catalyzes the excision of an oxidatively damaged form of guanine (7,8-dihydro-8-oxoguanine = 8-oxoG) from DNA. Also cleaves the DNA backbone at apurinic/apyrimidinic sites (AP sites). This chain is 8-oxoguanine DNA glycosylase/AP lyase, found in Korarchaeum cryptofilum (strain OPF8).